We begin with the raw amino-acid sequence, 195 residues long: MDRTTLPYGLFGLDIDPYKEFGATVELLSFLPSDFFPSVRDLLDTASALYRESLESSDHCSPHHTALRQAILCWGELMTLATWVGNNLEDPASRDLVVNYVNTNLGLKIRQLLWFHISCLTFGRETVLEYLVSFGVWIRTPPAYRPPNAPILSTLPETTVVRRRGRSPRRRTPSPRRRRSQSPRRRRSASPASQC.

Residues 148–195 (NAPILSTLPETTVVRRRGRSPRRRTPSPRRRRSQSPRRRRSASPASQC) are disordered. Residues 161–188 (VRRRGRSPRRRTPSPRRRRSQSPRRRRS) show a composition bias toward basic residues. Residues Ser-167, Ser-174, and Ser-182 each carry the phosphoserine; by host modification. The stretch at 167–172 (SPRRRT) is one 1; half-length repeat. Positions 167–188 (SPRRRTPSPRRRRSQSPRRRRS) are 3 X 7 AA repeats of S-P-R-R-R-[PR]-S. Residues 170–187 (RRTPSPRRRRSQSPRRRR) carry the Bipartite nuclear localization signal motif. 2 tandem repeats follow at residues 174 to 180 (SPRRRRS) and 182 to 188 (SPRRRRS). The RNA binding stretch occupies residues 189–195 (ASPASQC).

It belongs to the orthohepadnavirus core antigen family. In terms of assembly, homodimerizes, then multimerizes. Interacts with cytosol exposed regions of viral L glycoprotein present in the reticulum-to-Golgi compartment. Interacts with human FLNB. Phosphorylated form interacts with host importin alpha; this interaction depends on the exposure of the NLS, which itself depends upon genome maturation and/or phosphorylation of the capsid protein. Interacts with host NUP153. Post-translationally, phosphorylated by host SRPK1, SRPK2, and maybe protein kinase C or GAPDH. Phosphorylation is critical for pregenomic RNA packaging. Protein kinase C phosphorylation is stimulated by HBx protein and may play a role in transport of the viral genome to the nucleus at the late step during the viral replication cycle.

It is found in the virion. The protein localises to the host cytoplasm. Functionally, self assembles to form an icosahedral capsid. Most capsids appear to be large particles with an icosahedral symmetry of T=4 and consist of 240 copies of capsid protein, though a fraction forms smaller T=3 particles consisting of 180 capsid proteins. Entering capsids are transported along microtubules to the nucleus. Phosphorylation of the capsid is thought to induce exposure of nuclear localization signal in the C-terminal portion of the capsid protein that allows binding to the nuclear pore complex via the importin (karyopherin-) alpha and beta. Capsids are imported in intact form through the nuclear pore into the nuclear basket, where it probably binds NUP153. Only capsids that contain the mature viral genome can release the viral DNA and capsid protein into the nucleoplasm. Immature capsids get stuck in the basket. Capsids encapsulate the pre-genomic RNA and the P protein. Pre-genomic RNA is reverse-transcribed into DNA while the capsid is still in the cytoplasm. The capsid can then either be directed to the nucleus, providing more genomes for transcription, or bud through the endoplasmic reticulum to provide new virions. The protein is Capsid protein of Hepatitis B virus genotype G (isolate United States/USG17/2002) (HBV-G).